Here is a 777-residue protein sequence, read N- to C-terminus: Cyclin-F (777 aa).

The Nuclear localization signal 1 motif lies at 20–28 (KRRIKRRPR). The 48-residue stretch at 29 to 76 (NLTILSLPEDVLFHILKWLSVGDILAVRAVHSHLKYLVDNHASVWASA) folds into the F-box domain. Residues 288–405 (QASQAVNKQQ…EIISALEGKI (118 aa)) enclose the Cyclin N-terminal domain. Short sequence motifs (d box) lie at residues 310 to 313 (RYIL), 343 to 346 (RRRL), and 349 to 352 (RYKL). Disordered stretches follow at residues 544–591 (QESP…TPTA) and 651–777 (QESS…HLAS). The Nuclear localization signal 2 signature appears at 568–574 (RRSKRKR). Positions 582–761 (RGSFVTTPTA…ESGVHQQPVK (180 aa)) are PEST. Low complexity-rich tracts occupy residues 695 to 708 (SGYSSVSSSSPISS) and 719 to 731 (STSVLSVGSHSST). The span at 751-767 (PESGVHQQPVKRQNLSV) shows a compositional bias: polar residues. The short motif at 762–765 (RQNL) is the D box 4 element. Basic and acidic residues predominate over residues 768–777 (HSDKDMHLAS).

The protein belongs to the cyclin family. Cyclin AB subfamily. In terms of assembly, component of the SCF(CCNF) complex consisting of CUL1, RBX1, SKP1 and CCNF. Interacts with SKP1. Interacts with CUL1. Interacts with CCNB1; interaction is required for nuclear localization of CCNB1. Interacts with CCP110; this interaction leads to CCP110 ubiquitination and degradation via the proteasome pathway. Interacts (via the Cyclin N-terminal domain) with MYBL2/BMYB. Interacts with FZR1/CDH1 (via N-terminus). Interacts with RRM2 (via Cy motif and when phosphorylated at 'Thr-33'); the interaction occurs exclusively in G2 and early M. Interacts with CDC6 (via Cy motif); the interaction takes place during G2 and M phase. Degraded when the spindle assembly checkpoint is activated during the G2-M transition. Degradation is not dependent on the proteasome or ubiquitin and depends on the C-terminal PEST sequence. In terms of processing, phosphorylated just before cells enter into mitosis. Post-translationally, ubiquitinated by the anaphase-promoting complex (APC/C); leading to its degradation by the proteasome.

Its subcellular location is the nucleus. The protein resides in the cytoplasm. It localises to the perinuclear region. The protein localises to the cytoskeleton. It is found in the microtubule organizing center. Its subcellular location is the centrosome. The protein resides in the centriole. In terms of biological role, substrate recognition component of a SCF (SKP1-CUL1-F-box protein) E3 ubiquitin-protein ligase complex which mediates the ubiquitination and subsequent proteasomal degradation of target proteins. The SCF(CCNF) E3 ubiquitin-protein ligase complex is an integral component of the ubiquitin proteasome system (UPS) and links proteasome degradation to the cell cycle. Mediates the substrate recognition and the proteasomal degradation of various target proteins involved in the regulation of cell cycle progression and in the maintenance of genome stability. Mediates the ubiquitination and subsequent proteasomal degradation of CP110 during G2 phase, thereby acting as an inhibitor of centrosome reduplication. In G2, mediates the ubiquitination and proteasomal degradation of CDC6, thereby suppressing DNA re-replication and preventing genome instability. Involved in the ubiquitination and degradation of the substrate adapter CDH1 of the anaphase-promoting complex (APC/C), thereby acting as an antagonist of APC/C in regulating G1 progression and S phase entry. May play a role in the G2 cell cycle checkpoint control after DNA damage, possibly by promoting the ubiquitination of MYBL2/BMYB. This chain is Cyclin-F (Ccnf), found in Mus musculus (Mouse).